The following is a 155-amino-acid chain: Interleukin-2 (155 aa).

The N-terminal stretch at 1–20 (MYSRQLASCVALALVLLANS) is a signal peptide. Thr23 carries O-linked (GalNAc...) threonine glycosylation. Cys78 and Cys126 are disulfide-bonded.

This sequence belongs to the IL-2 family.

Its subcellular location is the secreted. Its function is as follows. Cytokine produced by activated CD4-positive helper T-cells and to a lesser extend activated CD8-positive T-cells and natural killer (NK) cells that plays pivotal roles in the immune response and tolerance. Binds to a receptor complex composed of either the high-affinity trimeric IL-2R (IL2RA/CD25, IL2RB/CD122 and IL2RG/CD132) or the low-affinity dimeric IL-2R (IL2RB and IL2RG). Interaction with the receptor leads to oligomerization and conformation changes in the IL-2R subunits resulting in downstream signaling starting with phosphorylation of JAK1 and JAK3. In turn, JAK1 and JAK3 phosphorylate the receptor to form a docking site leading to the phosphorylation of several substrates including STAT5. This process leads to activation of several pathways including STAT, phosphoinositide-3-kinase/PI3K and mitogen-activated protein kinase/MAPK pathways. Functions as a T-cell growth factor and can increase NK-cell cytolytic activity as well. Promotes strong proliferation of activated B-cells and subsequently immunoglobulin production. Plays a pivotal role in regulating the adaptive immune system by controlling the survival and proliferation of regulatory T-cells, which are required for the maintenance of immune tolerance. Moreover, participates in the differentiation and homeostasis of effector T-cell subsets, including Th1, Th2, Th17 as well as memory CD8-positive T-cells. The protein is Interleukin-2 (IL2) of Meriones unguiculatus (Mongolian jird).